A 442-amino-acid chain; its full sequence is Probable D-serine dehydratase (442 aa).

N6-(pyridoxal phosphate)lysine is present on Lys111.

It belongs to the serine/threonine dehydratase family. DsdA subfamily. Pyridoxal 5'-phosphate serves as cofactor.

The catalysed reaction is D-serine = pyruvate + NH4(+). The chain is Probable D-serine dehydratase from Sinorhizobium medicae (strain WSM419) (Ensifer medicae).